A 130-amino-acid chain; its full sequence is Classical arabinogalactan protein 7 (130 aa).

The first 21 residues, Met1–Ala21, serve as a signal peptide directing secretion. Gln22 carries the pyrrolidone carboxylic acid modification. Residues Gln22–Ala108 are disordered. Residues Pro24, Pro26, Pro28, Pro35, and Pro36 each carry the 4-hydroxyproline modification. Pro24, Pro26, Pro28, Pro35, and Pro36 each carry an O-linked (Ara...) hydroxyproline glycan. Residues Thr33–Ala68 show a composition bias toward pro residues. A lipid anchor (GPI-anchor amidated asparagine) is attached at Asn106. The propeptide at Ala107 to Ala130 is removed in mature form.

The protein belongs to the classical AGP family. Post-translationally, O-glycosylated on hydroxyprolines; noncontiguous hydroxylproline residues are glycosylated with arabinogalactan.

Its subcellular location is the cell membrane. Functionally, proteoglycan that seems to be implicated in diverse developmental roles such as differentiation, cell-cell recognition, embryogenesis and programmed cell death. The protein is Classical arabinogalactan protein 7 (AGP7) of Arabidopsis thaliana (Mouse-ear cress).